A 541-amino-acid chain; its full sequence is Light-independent protochlorophyllide reductase subunit B (541 aa).

Residue D36 coordinates [4Fe-4S] cluster. The active-site Proton donor is the D290. Residue 425 to 426 coordinates substrate; the sequence is GL.

This sequence belongs to the ChlB/BchB/BchZ family. Protochlorophyllide reductase is composed of three subunits; ChlL, ChlN and ChlB. Forms a heterotetramer of two ChlB and two ChlN subunits. The cofactor is [4Fe-4S] cluster.

The catalysed reaction is chlorophyllide a + oxidized 2[4Fe-4S]-[ferredoxin] + 2 ADP + 2 phosphate = protochlorophyllide a + reduced 2[4Fe-4S]-[ferredoxin] + 2 ATP + 2 H2O. It participates in porphyrin-containing compound metabolism; chlorophyll biosynthesis (light-independent). Its function is as follows. Component of the dark-operative protochlorophyllide reductase (DPOR) that uses Mg-ATP and reduced ferredoxin to reduce ring D of protochlorophyllide (Pchlide) to form chlorophyllide a (Chlide). This reaction is light-independent. The NB-protein (ChlN-ChlB) is the catalytic component of the complex. The polypeptide is Light-independent protochlorophyllide reductase subunit B (Synechococcus sp. (strain CC9902)).